The following is a 156-amino-acid chain: Ribosomal RNA large subunit methyltransferase H (156 aa).

Residues leucine 73, glycine 104, and 123–128 (LSRLTL) each bind S-adenosyl-L-methionine.

This sequence belongs to the RNA methyltransferase RlmH family. In terms of assembly, homodimer.

The protein resides in the cytoplasm. The enzyme catalyses pseudouridine(1915) in 23S rRNA + S-adenosyl-L-methionine = N(3)-methylpseudouridine(1915) in 23S rRNA + S-adenosyl-L-homocysteine + H(+). In terms of biological role, specifically methylates the pseudouridine at position 1915 (m3Psi1915) in 23S rRNA. The polypeptide is Ribosomal RNA large subunit methyltransferase H (Thiobacillus denitrificans (strain ATCC 25259 / T1)).